The sequence spans 149 residues: NADH-quinone oxidoreductase subunit A (149 aa).

Transmembrane regions (helical) follow at residues 16 to 36 (FAVFLLGAFGLCALMLLGAFF), 68 to 88 (FYLVAMFFVIFDVEALFLYAW), and 98 to 118 (LGFIEASIFILVLLAGLFYLV).

The protein belongs to the complex I subunit 3 family. As to quaternary structure, NDH-1 is composed of 13 different subunits. Subunits NuoA, H, J, K, L, M, N constitute the membrane sector of the complex.

The protein resides in the cell inner membrane. It catalyses the reaction a quinone + NADH + 5 H(+)(in) = a quinol + NAD(+) + 4 H(+)(out). Functionally, NDH-1 shuttles electrons from NADH, via FMN and iron-sulfur (Fe-S) centers, to quinones in the respiratory chain. The immediate electron acceptor for the enzyme in this species is believed to be ubiquinone. Couples the redox reaction to proton translocation (for every two electrons transferred, four hydrogen ions are translocated across the cytoplasmic membrane), and thus conserves the redox energy in a proton gradient. This Photorhabdus laumondii subsp. laumondii (strain DSM 15139 / CIP 105565 / TT01) (Photorhabdus luminescens subsp. laumondii) protein is NADH-quinone oxidoreductase subunit A.